Reading from the N-terminus, the 894-residue chain is Phosphoenolpyruvate carboxylase (894 aa).

Catalysis depends on residues H143 and K556.

Belongs to the PEPCase type 1 family. Mg(2+) is required as a cofactor.

The enzyme catalyses oxaloacetate + phosphate = phosphoenolpyruvate + hydrogencarbonate. In terms of biological role, forms oxaloacetate, a four-carbon dicarboxylic acid source for the tricarboxylic acid cycle. The chain is Phosphoenolpyruvate carboxylase from Acinetobacter baylyi (strain ATCC 33305 / BD413 / ADP1).